The chain runs to 1604 residues: Collagen alpha-1(XVI) chain (1604 aa).

The first 21 residues, 1–21 (MWVSWAPGLWLLGLWATFGHG), serve as a signal peptide directing secretion. A glycan (N-linked (GlcNAc...) asparagine) is linked at Asn-47. Positions 50-231 (GFNLIHRLSL…LQQVHIYCDP (182 aa)) constitute a Laminin G-like domain. The interval 232–374 (ELVLEEGCCE…SPDAPLQCAE (143 aa)) is nonhelical region 10 (NC10). Over residues 301-311 (AERGAKVHQET) the composition is skewed to basic and acidic residues. Residues 301-509 (AERGAKVHQE…KGEKGDPCEV (209 aa)) form a disordered region. N-linked (GlcNAc...) asparagine glycosylation occurs at Asn-327. Positions 375–423 (GPKGEKGESGALGPSGLPGSTGEKGQKGEKGDGGIKGVPGKPGRDGRPG) constitute a Collagen-like 1 domain. The triple-helical region 9 (COL9) with 3 imperfections stretch occupies residues 375–506 (GPKGEKGESG…PGVKGEKGDP (132 aa)). Low complexity predominate over residues 383 to 397 (SGALGPSGLPGSTGE). Residues 398–407 (KGQKGEKGDG) are compositionally biased toward basic and acidic residues. Residues 449 to 460 (PGPPGLPGPPGI) are compositionally biased toward pro residues. Residues 486–495 (GKEGPGGKPG) show a composition bias toward gly residues. The interval 507–521 (CEVCPTLPEGFQNFV) is nonhelical region 9 (NC9). The tract at residues 522–555 (GLPGKPGPKGEPGDPVPARGDPGIQGIKGEKGEP) is triple-helical region 8 (COL8) with 1 imperfection. The Cell attachment site signature appears at 540–542 (RGD). The nonhelical region 8 (NC8) stretch occupies residues 556-572 (CLSCSSVVGAQHLVSST). Residues 573–631 (GASGDVGSPGFGLPGLPGRAGVPGLKGEKGNFGEAGPAGSPGPPGPVGPAGIKGAKGEP) form a triple-helical region 7 (COL7) with 1 imperfection region. Collagen-like domains follow at residues 573 to 633 (GASG…EPCE) and 667 to 721 (GLPG…GEKG). The segment at 604-917 (FGEAGPAGSP…PPGIPGPPGP (314 aa)) is disordered. The tract at residues 632 to 652 (CEPCPALSNLQDGDVRVVALP) is nonhelical region 7 (NC7). Residues 653–723 (GPSGEKGEPG…AGPKGEKGDG (71 aa)) are triple-helical region 6 (COL6) with 1 imperfection. Positions 674–684 (KAGERGLKGQK) are enriched in basic and acidic residues. A compositionally biased stretch (low complexity) spans 686–702 (DAGNPGDPGTPGTTGRP). Residues 724 to 738 (CTACPSLQGTVTDMA) form a nonhelical region 6 (NC6) region. The triple-helical region 5 (COL5) with 3 imperfections stretch occupies residues 739–876 (GRPGQPGPKG…RGEKGEPGEC (138 aa)). Composition is skewed to low complexity over residues 766-781 (LPGV…VQGE), 792-808 (PQGE…QGLP), and 826-846 (PGVK…SGPP). The 53-residue stretch at 788-840 (GVQGPQGEPGAPGLPGIQGLPGPRGPPGPTGEKGAQGSPGVKGATGPVGPPGA) folds into the Collagen-like 4 domain. Residues 864-873 (KGPRGEKGEP) are compositionally biased toward basic and acidic residues. Residues 877-887 (SCPSQGDLIFS) are nonhelical region 5 (NC5). The 51-residue stretch at 888–938 (GMPGAPGLWMGSSWQPGPQGPPGIPGPPGPPGVPGLQGVPGNNGLPGQPGL) folds into the Collagen-like 5 domain. Residues 888 to 939 (GMPGAPGLWMGSSWQPGPQGPPGIPGPPGPPGVPGLQGVPGNNGLPGQPGLT) form a triple-helical region 4 (COL4) with 2 imperfections region. Pro residues predominate over residues 905 to 917 (PQGPPGIPGPPGP). Positions 940–973 (AELGSLPIEQHLLKSICGDCVQGQRAHPGYLVEK) are nonhelical region 4 (NC4). The triple-helical region 3 (COL3) stretch occupies residues 974 to 988 (GEKGDQGIPGVPGLD). Residues 989 to 1011 (NCAQCFLSLERPRAEEARGDNSE) form a nonhelical region 3 (NC3) region. Disordered stretches follow at residues 1001-1429 (RAEE…VPGS) and 1468-1517 (MAAA…PGTK). Residues 1006-1008 (RGD) carry the Cell attachment site motif. The tract at residues 1012–1433 (GDPGCVGSPG…PGVPGSMGDM (422 aa)) is triple-helical region 2 (COL2) with 2 imperfections. The 58-residue stretch at 1018-1075 (GSPGLPGPPGLPGQRGEEGPPGMRGSPGPPGPIGPPGFPGAVGSPGLPGLQGERGLTG) folds into the Collagen-like 6 domain. Pro residues-rich tracts occupy residues 1044–1055 (PGPPGPIGPPGF), 1160–1169 (FPGPPGPPGF), and 1199–1208 (SPGPPGPPGI). A compositionally biased stretch (basic and acidic residues) spans 1217 to 1226 (LDGKDGKPGL). A Cell attachment site motif is present at residues 1227–1229 (RGD). Positions 1271–1284 (RPGAEGEPGAMGPQ) are enriched in low complexity. 2 stretches are compositionally biased toward pro residues: residues 1286 to 1302 (RPGP…PGQP) and 1330 to 1342 (QPGP…PPGE). The span at 1369–1378 (DPGAAGQKGQ) shows a compositional bias: low complexity. The span at 1386-1395 (GMPGGPGKSG) shows a compositional bias: gly residues. The segment covering 1420-1429 (SPGLPGVPGS) has biased composition (low complexity). The tract at residues 1434-1472 (VNYDEIKRFIRQEIIKMFDERMAYYTSRMQFPMEMAAAP) is nonhelical region 2 (NC2). Collagen-like domains are found at residues 1472 to 1524 (PGRP…GDIG) and 1528 to 1576 (AGEN…GKAG). The interval 1473–1578 (GRPGPPGKDG…MGQPGKAGHC (106 aa)) is triple-helical region 1 (COL1) with 2 imperfections. The segment at 1579–1604 (NPSDCFGAMPMEQQYPPMKTMKGPFG) is nonhelical region 1 (NC1).

This sequence belongs to the fibril-associated collagens with interrupted helices (FACIT) family. In terms of assembly, homotrimer. Interacts with FBN1, fibronectin and integrins ITGA1/ITGB1 and ITGA2/ITGB1. Integrin ITGA1/ITGB1 binds to a unique site within COL16A1 located close to its C-terminal end between collagenous domains COL1-COL3. Post-translationally, prolines at the third position of the tripeptide repeating unit (G-X-Y) are hydroxylated in some or all of the chains. In terms of processing, glycosylated. In terms of tissue distribution, in papillary dermis, is a component of specialized fibrillin-1-containing microfibrils, whereas in territorial cartilage matrix, it is localized to a discrete population of thin, weakly banded collagen fibrils in association with other collagens (at protein level). In the placenta, where it is found in the amnion, a membranous tissue lining the amniotic cavity. Within the amnion, it is found in an acellular, relatively dense layer of a complex network of reticular fibers. Also located to a fibroblast layer beneath this dense layer. Exists in tissues in association with other types of collagen.

The protein resides in the secreted. It localises to the extracellular space. The protein localises to the extracellular matrix. Functionally, involved in mediating cell attachment and inducing integrin-mediated cellular reactions, such as cell spreading and alterations in cell morphology. This chain is Collagen alpha-1(XVI) chain (COL16A1), found in Homo sapiens (Human).